Consider the following 129-residue polypeptide: UPF0102 protein amb4503 (129 aa).

This sequence belongs to the UPF0102 family.

The protein is UPF0102 protein amb4503 of Paramagnetospirillum magneticum (strain ATCC 700264 / AMB-1) (Magnetospirillum magneticum).